The sequence spans 109 residues: Putative gametogenetin-binding protein 1 (109 aa).

The interval 24–109 (KAFRSTDTVG…KGEMGNWPPE (86 aa)) is interaction with GGN.

Interacts with CCDC159. Interacts with GGN.

It is found in the cytoplasm. The protein resides in the membrane. It localises to the golgi apparatus. May be involved in spermatogenesis. This is Putative gametogenetin-binding protein 1 (GGNBP1) from Homo sapiens (Human).